The primary structure comprises 256 residues: Homeobox-leucine zipper protein HOX18 (256 aa).

Residues 52–117 (YDHGRDEEQA…GGGGGTRKKL (66 aa)) form a disordered region. Residues 102 to 112 (DGGSGSGGGGG) are compositionally biased toward gly residues. Positions 112-171 (GTRKKLQLTKEQSTLLEDSFRVHNILSHAQKHELARQLKLKPRQVEVWFQNRRARTKLKQ) form a DNA-binding region, homeobox. Residues 170–214 (KQTEVDCEFLKRCCESLTEENKQLKHELMELRRLASAAAAAAGSQ) are leucine-zipper.

The protein belongs to the HD-ZIP homeobox family. Class II subfamily. Expressed in roots, leaf sheaths and blades and panicles.

The protein resides in the nucleus. Its function is as follows. Probable transcription factor. The polypeptide is Homeobox-leucine zipper protein HOX18 (HOX18) (Oryza sativa subsp. indica (Rice)).